The chain runs to 1435 residues: Protein clueless (1435 aa).

The tract at residues 1 to 97 (MALEMDSKNS…KPEGDGDADA (97 aa)) is disordered. A compositionally biased stretch (low complexity) spans 18-35 (AAAATTKTNKAKENNNLA). Residues 38 to 50 (KKNQSQNLVNGNG) show a composition bias toward polar residues. Residues 58–67 (TKKKGKKNRN) show a composition bias toward basic residues. Serine 266 carries the phosphoserine modification. The 243-residue stretch at 420–662 (RAEDAFSSKL…RTFPPDVNFL (243 aa)) folds into the Clu domain. Composition is skewed to basic and acidic residues over residues 719 to 731 (KKPE…EKKQ) and 752 to 762 (PNEKEKDTPVE). 2 disordered regions span residues 719–762 (KKPE…TPVE) and 952–998 (VSND…SSSS). Residues 959-975 (KKRGGNGGKHNKHKSSK) are compositionally biased toward basic residues. The span at 988–998 (NGGSTTSSSSS) shows a compositional bias: low complexity. TPR repeat units follow at residues 1096–1129 (AYNF…LNNV), 1222–1255 (ALID…NLKY), and 1257–1290 (GNKA…EKET). A disordered region spans residues 1407 to 1435 (EVLAPQDNNKEQAATAQQLTNGDKVAVSS). Residues 1417–1435 (EQAATAQQLTNGDKVAVSS) are compositionally biased toward polar residues.

This sequence belongs to the CLU family.

The protein resides in the cytoplasm. Functionally, mRNA-binding protein involved in proper cytoplasmic distribution of mitochondria. The chain is Protein clueless from Drosophila persimilis (Fruit fly).